The following is a 140-amino-acid chain: Putative nickel-responsive regulator 3 (140 aa).

4 residues coordinate Ni(2+): H81, H92, H94, and C100.

This sequence belongs to the transcriptional regulatory CopG/NikR family. Ni(2+) is required as a cofactor.

Functionally, transcriptional regulator. The protein is Putative nickel-responsive regulator 3 of Methanosarcina acetivorans (strain ATCC 35395 / DSM 2834 / JCM 12185 / C2A).